The chain runs to 160 residues: Serine-protein kinase RsbW (160 aa).

The protein belongs to the anti-sigma-factor family.

It catalyses the reaction L-seryl-[protein] + ATP = O-phospho-L-seryl-[protein] + ADP + H(+). The catalysed reaction is L-threonyl-[protein] + ATP = O-phospho-L-threonyl-[protein] + ADP + H(+). Negative regulator of sigma-B activity. Phosphorylates and inactivates its specific antagonist protein, RsbV. Upon phosphorylation of RsbV, RsbW is released and binds to sigma-B, thereby blocking its ability to form an RNA polymerase holoenzyme (E-sigma-B). This chain is Serine-protein kinase RsbW, found in Bacillus anthracis (strain A0248).